The chain runs to 201 residues: 3-isopropylmalate dehydratase small subunit (201 aa).

It belongs to the LeuD family. LeuD type 1 subfamily. As to quaternary structure, heterodimer of LeuC and LeuD.

It carries out the reaction (2R,3S)-3-isopropylmalate = (2S)-2-isopropylmalate. It functions in the pathway amino-acid biosynthesis; L-leucine biosynthesis; L-leucine from 3-methyl-2-oxobutanoate: step 2/4. In terms of biological role, catalyzes the isomerization between 2-isopropylmalate and 3-isopropylmalate, via the formation of 2-isopropylmaleate. This is 3-isopropylmalate dehydratase small subunit from Brucella abortus (strain S19).